A 71-amino-acid chain; its full sequence is Small ribosomal subunit protein bS18 (71 aa).

The protein belongs to the bacterial ribosomal protein bS18 family. In terms of assembly, part of the 30S ribosomal subunit. Forms a tight heterodimer with protein bS6.

In terms of biological role, binds as a heterodimer with protein bS6 to the central domain of the 16S rRNA, where it helps stabilize the platform of the 30S subunit. This is Small ribosomal subunit protein bS18 from Microcystis aeruginosa (strain NIES-843 / IAM M-2473).